The primary structure comprises 206 residues: Holliday junction branch migration complex subunit RuvA (206 aa).

Positions 1–64 are domain I; it reads MIGKLKGVLD…EDMIRLYGFR (64 aa). The domain II stretch occupies residues 65 to 144; sequence TVLEREWFRL…AFAGEAAGAI (80 aa). The tract at residues 145-154 is flexible linker; it reads GLKQDLGEGV. A domain III region spans residues 154 to 206; it reads VAPAPVSDAVSALANLGYSRDIAANAVAAALKSAGEGADTGTLIRLGLKELAR.

The protein belongs to the RuvA family. Homotetramer. Forms an RuvA(8)-RuvB(12)-Holliday junction (HJ) complex. HJ DNA is sandwiched between 2 RuvA tetramers; dsDNA enters through RuvA and exits via RuvB. An RuvB hexamer assembles on each DNA strand where it exits the tetramer. Each RuvB hexamer is contacted by two RuvA subunits (via domain III) on 2 adjacent RuvB subunits; this complex drives branch migration. In the full resolvosome a probable DNA-RuvA(4)-RuvB(12)-RuvC(2) complex forms which resolves the HJ.

It is found in the cytoplasm. The RuvA-RuvB-RuvC complex processes Holliday junction (HJ) DNA during genetic recombination and DNA repair, while the RuvA-RuvB complex plays an important role in the rescue of blocked DNA replication forks via replication fork reversal (RFR). RuvA specifically binds to HJ cruciform DNA, conferring on it an open structure. The RuvB hexamer acts as an ATP-dependent pump, pulling dsDNA into and through the RuvAB complex. HJ branch migration allows RuvC to scan DNA until it finds its consensus sequence, where it cleaves and resolves the cruciform DNA. This Chelativorans sp. (strain BNC1) protein is Holliday junction branch migration complex subunit RuvA.